We begin with the raw amino-acid sequence, 417 residues long: NADH-quinone oxidoreductase subunit D (417 aa).

Belongs to the complex I 49 kDa subunit family. As to quaternary structure, NDH-1 is composed of 14 different subunits. Subunits NuoB, C, D, E, F, and G constitute the peripheral sector of the complex.

It localises to the cell inner membrane. The catalysed reaction is a quinone + NADH + 5 H(+)(in) = a quinol + NAD(+) + 4 H(+)(out). Its function is as follows. NDH-1 shuttles electrons from NADH, via FMN and iron-sulfur (Fe-S) centers, to quinones in the respiratory chain. The immediate electron acceptor for the enzyme in this species is believed to be ubiquinone. Couples the redox reaction to proton translocation (for every two electrons transferred, four hydrogen ions are translocated across the cytoplasmic membrane), and thus conserves the redox energy in a proton gradient. The sequence is that of NADH-quinone oxidoreductase subunit D from Cupriavidus taiwanensis (strain DSM 17343 / BCRC 17206 / CCUG 44338 / CIP 107171 / LMG 19424 / R1) (Ralstonia taiwanensis (strain LMG 19424)).